A 191-amino-acid polypeptide reads, in one-letter code: Inosine triphosphate pyrophosphatase (191 aa).

Residue 12-17 participates in ITP binding; that stretch reads TGNKNK. Glutamate 40 is a binding site for Mg(2+). ITP-binding positions include lysine 52, 68 to 69, lysine 85, 144 to 147, lysine 167, and 172 to 173; these read DS, FGWE, and HR.

The protein belongs to the HAM1 NTPase family. Homodimer. Mg(2+) is required as a cofactor. Mn(2+) serves as cofactor.

It localises to the cytoplasm. It is found in the nucleus. It carries out the reaction ITP + H2O = IMP + diphosphate + H(+). The catalysed reaction is dITP + H2O = dIMP + diphosphate + H(+). It catalyses the reaction XTP + H2O = XMP + diphosphate + H(+). In terms of biological role, pyrophosphatase that hydrolyzes non-canonical purine nucleotides such as inosine triphosphate (ITP), deoxyinosine triphosphate (dITP) or xanthosine 5'-triphosphate (XTP) to their respective monophosphate derivatives. The enzyme does not distinguish between the deoxy- and ribose forms. Probably excludes non-canonical purines from RNA and DNA precursor pools, thus preventing their incorporation into RNA and DNA and avoiding chromosomal lesions. The chain is Inosine triphosphate pyrophosphatase from Aspergillus oryzae (strain ATCC 42149 / RIB 40) (Yellow koji mold).